An 86-amino-acid chain; its full sequence is Small ribosomal subunit protein bS20 (86 aa).

Residues 1-25 (MANIKSQIKRIRTNEKARQRNKAYK) form a disordered region. Over residues 12 to 25 (RTNEKARQRNKAYK) the composition is skewed to basic and acidic residues.

It belongs to the bacterial ribosomal protein bS20 family.

Functionally, binds directly to 16S ribosomal RNA. This Beutenbergia cavernae (strain ATCC BAA-8 / DSM 12333 / CCUG 43141 / JCM 11478 / NBRC 16432 / NCIMB 13614 / HKI 0122) protein is Small ribosomal subunit protein bS20.